The following is a 317-amino-acid chain: Olfactory receptor 2G2 (317 aa).

Topologically, residues 1–28 (MGMVRHTNESNLAGFILLGFSDYPQLQK) are extracellular. The N-linked (GlcNAc...) asparagine glycan is linked to N8. Residues 29-52 (VLFVLILILYLLTILGNTTIILVS) traverse the membrane as a helical segment. Topologically, residues 53–60 (RLEPKLHM) are cytoplasmic. The chain crosses the membrane as a helical span at residues 61 to 82 (PMYFFLSHLSFLYRCFTSSVIP). Residues 83–103 (QLLVNLWEPMKTIAYGGCLVH) lie on the Extracellular side of the membrane. An intrachain disulfide couples C100 to C192. A helical transmembrane segment spans residues 104–123 (LYNSHALGSTECVLPAVMSC). Topologically, residues 124–142 (DRYVAVCRPLHYTVLMHIH) are cytoplasmic. Residues 143 to 161 (LCMALASMAWLSGIATTLV) traverse the membrane as a helical segment. At 162–198 (QSTLTLQLPFCGHRQVDHFICEVPVLIKLACVGTTFN) the chain is on the extracellular side. A helical transmembrane segment spans residues 199 to 222 (EAELFVASILFLIVPVSFILVSSG). Over 223 to 239 (YIAHAVLRIKSATRRQK) the chain is Cytoplasmic. The helical transmembrane segment at 240–262 (AFGTCFSHLTVVTIFYGTIIFMY) threads the bilayer. Over 263 to 275 (LQPAKSRSRDQGK) the chain is Extracellular. Residues 276–295 (FVSLFYTVVTRMLNPLIYTL) traverse the membrane as a helical segment. Over 296 to 317 (RIKEVKGALKKVLAKALGVNIL) the chain is Cytoplasmic.

It belongs to the G-protein coupled receptor 1 family.

Its subcellular location is the cell membrane. In terms of biological role, odorant receptor. In Homo sapiens (Human), this protein is Olfactory receptor 2G2 (OR2G2).